Consider the following 89-residue polypeptide: Co-chaperonin GroES (89 aa).

This sequence belongs to the GroES chaperonin family. In terms of assembly, heptamer of 7 subunits arranged in a ring. Interacts with the chaperonin GroEL.

It localises to the cytoplasm. In terms of biological role, together with the chaperonin GroEL, plays an essential role in assisting protein folding. The GroEL-GroES system forms a nano-cage that allows encapsulation of the non-native substrate proteins and provides a physical environment optimized to promote and accelerate protein folding. GroES binds to the apical surface of the GroEL ring, thereby capping the opening of the GroEL channel. The polypeptide is Co-chaperonin GroES (Wolinella succinogenes (strain ATCC 29543 / DSM 1740 / CCUG 13145 / JCM 31913 / LMG 7466 / NCTC 11488 / FDC 602W) (Vibrio succinogenes)).